Consider the following 354-residue polypeptide: Uroporphyrinogen decarboxylase (354 aa).

Substrate is bound by residues 30–34 (RQAGR), D79, Y154, S209, and H333.

This sequence belongs to the uroporphyrinogen decarboxylase family. Homodimer.

The protein localises to the cytoplasm. It carries out the reaction uroporphyrinogen III + 4 H(+) = coproporphyrinogen III + 4 CO2. It participates in porphyrin-containing compound metabolism; protoporphyrin-IX biosynthesis; coproporphyrinogen-III from 5-aminolevulinate: step 4/4. Functionally, catalyzes the decarboxylation of four acetate groups of uroporphyrinogen-III to yield coproporphyrinogen-III. This chain is Uroporphyrinogen decarboxylase, found in Mycolicibacterium gilvum (strain PYR-GCK) (Mycobacterium gilvum (strain PYR-GCK)).